We begin with the raw amino-acid sequence, 95 residues long: Co-chaperonin GroES (95 aa).

It belongs to the GroES chaperonin family. Heptamer of 7 subunits arranged in a ring. Interacts with the chaperonin GroEL.

It localises to the cytoplasm. In terms of biological role, together with the chaperonin GroEL, plays an essential role in assisting protein folding. The GroEL-GroES system forms a nano-cage that allows encapsulation of the non-native substrate proteins and provides a physical environment optimized to promote and accelerate protein folding. GroES binds to the apical surface of the GroEL ring, thereby capping the opening of the GroEL channel. This is Co-chaperonin GroES from Chlorobium luteolum (strain DSM 273 / BCRC 81028 / 2530) (Pelodictyon luteolum).